The primary structure comprises 230 residues: Cyclin-U2-2 (230 aa).

It belongs to the cyclin family. Cyclin U/P subfamily. As to quaternary structure, interacts with CDKA-1. In terms of tissue distribution, expressed in roots and stems. Expressed in the shoot apex, leaf primordia and young leaves.

The sequence is that of Cyclin-U2-2 (CYCU2-2) from Arabidopsis thaliana (Mouse-ear cress).